A 129-amino-acid chain; its full sequence is 3-aminoacrylate deaminase RutC (129 aa).

This sequence belongs to the RutC family.

The enzyme catalyses (Z)-3-aminoacrylate + H2O + H(+) = 3-oxopropanoate + NH4(+). Involved in pyrimidine catabolism. Catalyzes the deamination of 3-aminoacrylate to malonic semialdehyde, a reaction that can also occur spontaneously. RutC may facilitate the reaction and modulate the metabolic fitness, rather than catalyzing essential functions. The protein is 3-aminoacrylate deaminase RutC of Yersinia enterocolitica serotype O:8 / biotype 1B (strain NCTC 13174 / 8081).